Consider the following 446-residue polypeptide: Probable D-serine dehydratase (446 aa).

The residue at position 116 (K116) is an N6-(pyridoxal phosphate)lysine.

This sequence belongs to the serine/threonine dehydratase family. DsdA subfamily. Pyridoxal 5'-phosphate serves as cofactor.

It carries out the reaction D-serine = pyruvate + NH4(+). This chain is Probable D-serine dehydratase, found in Bacillus anthracis (strain CDC 684 / NRRL 3495).